The sequence spans 492 residues: Ketol-acid reductoisomerase (NADP(+)) (492 aa).

The KARI N-terminal Rossmann domain maps to 15 to 208 (AQLGQCRFMD…GGDRAGVLQS (194 aa)). Residues 45 to 48 (CGAQ), R68, R76, S78, and 108 to 110 (DKQ) contribute to the NADP(+) site. H132 is an active-site residue. G158 serves as a coordination point for NADP(+). 2 consecutive KARI C-terminal knotted domains span residues 209–353 (SFIA…DEQT) and 354–486 (YFDK…MTDM). Residues D217, E221, E389, and E393 each contribute to the Mg(2+) site. S414 serves as a coordination point for substrate.

This sequence belongs to the ketol-acid reductoisomerase family. Requires Mg(2+) as cofactor.

The catalysed reaction is (2R)-2,3-dihydroxy-3-methylbutanoate + NADP(+) = (2S)-2-acetolactate + NADPH + H(+). It carries out the reaction (2R,3R)-2,3-dihydroxy-3-methylpentanoate + NADP(+) = (S)-2-ethyl-2-hydroxy-3-oxobutanoate + NADPH + H(+). Its pathway is amino-acid biosynthesis; L-isoleucine biosynthesis; L-isoleucine from 2-oxobutanoate: step 2/4. The protein operates within amino-acid biosynthesis; L-valine biosynthesis; L-valine from pyruvate: step 2/4. In terms of biological role, involved in the biosynthesis of branched-chain amino acids (BCAA). Catalyzes an alkyl-migration followed by a ketol-acid reduction of (S)-2-acetolactate (S2AL) to yield (R)-2,3-dihydroxy-isovalerate. In the isomerase reaction, S2AL is rearranged via a Mg-dependent methyl migration to produce 3-hydroxy-3-methyl-2-ketobutyrate (HMKB). In the reductase reaction, this 2-ketoacid undergoes a metal-dependent reduction by NADPH to yield (R)-2,3-dihydroxy-isovalerate. This is Ketol-acid reductoisomerase (NADP(+)) from Shewanella oneidensis (strain ATCC 700550 / JCM 31522 / CIP 106686 / LMG 19005 / NCIMB 14063 / MR-1).